The chain runs to 214 residues: Adenylate kinase (214 aa).

10–15 (GAGKGT) contacts ATP. Positions 30-59 (STGDMLRAAVKAGTPLGLEAKKVMDAGQLV) are NMP. Residues T31, R36, 57 to 59 (QLV), 85 to 88 (GFPR), and Q92 each bind AMP. Residues 122–159 (GRRVHPGSGRVYHVVFNPPKVEGKDDVTGEDLAIRPDD) form an LID region. Residues R123 and 132–133 (VY) each bind ATP. The AMP site is built by R156 and R167. Q200 contacts ATP.

Belongs to the adenylate kinase family. Monomer.

It is found in the cytoplasm. It catalyses the reaction AMP + ATP = 2 ADP. Its pathway is purine metabolism; AMP biosynthesis via salvage pathway; AMP from ADP: step 1/1. Catalyzes the reversible transfer of the terminal phosphate group between ATP and AMP. Plays an important role in cellular energy homeostasis and in adenine nucleotide metabolism. This chain is Adenylate kinase, found in Shewanella sp. (strain ANA-3).